The following is a 156-amino-acid chain: ATP synthase subunit b (156 aa).

The helical transmembrane segment at 7-29 (LLGQAISFALFVWFCIKFVWPPL) threads the bilayer.

It belongs to the ATPase B chain family. As to quaternary structure, F-type ATPases have 2 components, F(1) - the catalytic core - and F(0) - the membrane proton channel. F(1) has five subunits: alpha(3), beta(3), gamma(1), delta(1), epsilon(1). F(0) has three main subunits: a(1), b(2) and c(10-14). The alpha and beta chains form an alternating ring which encloses part of the gamma chain. F(1) is attached to F(0) by a central stalk formed by the gamma and epsilon chains, while a peripheral stalk is formed by the delta and b chains.

Its subcellular location is the cell inner membrane. Its function is as follows. F(1)F(0) ATP synthase produces ATP from ADP in the presence of a proton or sodium gradient. F-type ATPases consist of two structural domains, F(1) containing the extramembraneous catalytic core and F(0) containing the membrane proton channel, linked together by a central stalk and a peripheral stalk. During catalysis, ATP synthesis in the catalytic domain of F(1) is coupled via a rotary mechanism of the central stalk subunits to proton translocation. Functionally, component of the F(0) channel, it forms part of the peripheral stalk, linking F(1) to F(0). This Shewanella sp. (strain W3-18-1) protein is ATP synthase subunit b.